The sequence spans 158 residues: Phosphopantetheine adenylyltransferase (158 aa).

Substrate is bound at residue Thr-9. ATP is bound by residues Thr-9 to Phe-10 and His-17. The substrate site is built by Lys-41, Leu-73, and Arg-87. ATP-binding positions include Gly-88 to Arg-90, Glu-98, and Trp-123 to Thr-129.

This sequence belongs to the bacterial CoaD family. Homohexamer. Requires Mg(2+) as cofactor.

The protein resides in the cytoplasm. The enzyme catalyses (R)-4'-phosphopantetheine + ATP + H(+) = 3'-dephospho-CoA + diphosphate. It participates in cofactor biosynthesis; coenzyme A biosynthesis; CoA from (R)-pantothenate: step 4/5. Functionally, reversibly transfers an adenylyl group from ATP to 4'-phosphopantetheine, yielding dephospho-CoA (dPCoA) and pyrophosphate. The protein is Phosphopantetheine adenylyltransferase of Histophilus somni (strain 129Pt) (Haemophilus somnus).